Reading from the N-terminus, the 186-residue chain is TATA-box-binding protein B (186 aa).

2 repeat units span residues I10–I86 and V101–L179.

It belongs to the TBP family.

In terms of biological role, general factor that plays a role in the activation of archaeal genes transcribed by RNA polymerase. Binds specifically to the TATA box promoter element which lies close to the position of transcription initiation. The polypeptide is TATA-box-binding protein B (tbpB1) (Halobacterium salinarum (strain ATCC 700922 / JCM 11081 / NRC-1) (Halobacterium halobium)).